The following is a 1097-amino-acid chain: DNA-directed RNA polymerase subunit beta (1097 aa).

Residues 1073–1097 (DVNPRRSTPSRPTYESLGVADYDED) form a disordered region.

The protein belongs to the RNA polymerase beta chain family. As to quaternary structure, in cyanobacteria the RNAP catalytic core is composed of 2 alpha, 1 beta, 1 beta', 1 gamma and 1 omega subunit. When a sigma factor is associated with the core the holoenzyme is formed, which can initiate transcription.

The catalysed reaction is RNA(n) + a ribonucleoside 5'-triphosphate = RNA(n+1) + diphosphate. Functionally, DNA-dependent RNA polymerase catalyzes the transcription of DNA into RNA using the four ribonucleoside triphosphates as substrates. The sequence is that of DNA-directed RNA polymerase subunit beta from Synechococcus sp. (strain RCC307).